We begin with the raw amino-acid sequence, 210 residues long: MKRTAVSLCLLTGLLSGCGGAGLDNAQNVRNQTQNQTKPIHVSDRNEAFNRHNENEQFGYVRYQKEQFDGEQQKTPVMNREETAHMISSLTVQLPHIQDAATLVTDREALVVYKTDSKNRELTADQVKKTAASVIPRYYHVYISDNPNHMQSVENYSNLGSGSRDIREIMSGTIQEMKTSPQGSPVSENENANGETRQDMKIDRNDKNAR.

The signal sequence occupies residues 1–17 (MKRTAVSLCLLTGLLSG). Cysteine 18 is lipidated: N-palmitoyl cysteine. Cysteine 18 carries the S-diacylglycerol cysteine lipid modification. Polar residues predominate over residues 176–195 (EMKTSPQGSPVSENENANGE). The tract at residues 176 to 210 (EMKTSPQGSPVSENENANGETRQDMKIDRNDKNAR) is disordered. A compositionally biased stretch (basic and acidic residues) spans 196–210 (TRQDMKIDRNDKNAR).

The protein localises to the cell membrane. This is an uncharacterized protein from Bacillus subtilis (strain 168).